Reading from the N-terminus, the 599-residue chain is uncharacterized protein (599 aa).

Residues 1–13 are compositionally biased toward low complexity; it reads MSSSSSHNSFSGS. Disordered stretches follow at residues 1–27 and 41–86; these read MSSS…IDGL and YPSN…DDTN. Residues 14–27 show a composition bias toward polar residues; the sequence is KTNAAEGQNSIDGL. Positions 44-70 are enriched in basic and acidic residues; sequence NEEKEVKETDIVPDENKVNELDVHKQS. The next 14 membrane-spanning stretches (helical) occupy residues 97 to 117, 135 to 155, 162 to 182, 192 to 212, 223 to 243, 251 to 271, 290 to 310, 321 to 341, 359 to 379, 396 to 416, 423 to 443, 452 to 472, 489 to 509, and 552 to 572; these read IVVP…TIVT, WIGS…GVFC, IVLY…GASQ, AIQG…ISDI, GILA…GGAI, WIFF…VVFL, FIGL…ISLG, ILCY…YDTF, AALL…AYYV, VHTI…GMVL, LPLI…MICV, VMGL…PPLI, TLMF…EVIF, and VIWI…FFIK.

This sequence belongs to the major facilitator superfamily. TCR/Tet family.

It is found in the membrane. This is an uncharacterized protein from Schizosaccharomyces pombe (strain 972 / ATCC 24843) (Fission yeast).